Consider the following 236-residue polypeptide: Small ribosomal subunit protein uS2c (236 aa).

The protein belongs to the universal ribosomal protein uS2 family.

The protein resides in the plastid. It localises to the chloroplast. In Pisum sativum (Garden pea), this protein is Small ribosomal subunit protein uS2c (rps2).